The following is a 440-amino-acid chain: Ribosomal protein uS12 methylthiotransferase RimO (440 aa).

The region spanning Met1 to Ser117 is the MTTase N-terminal domain. Residues Cys10, Cys46, Cys80, Cys155, Cys159, and Cys162 each coordinate [4Fe-4S] cluster. The region spanning Cys141–Arg371 is the Radical SAM core domain. Positions Ala374 to Gln440 constitute a TRAM domain.

It belongs to the methylthiotransferase family. RimO subfamily. [4Fe-4S] cluster is required as a cofactor.

The protein localises to the cytoplasm. The enzyme catalyses L-aspartate(89)-[ribosomal protein uS12]-hydrogen + (sulfur carrier)-SH + AH2 + 2 S-adenosyl-L-methionine = 3-methylsulfanyl-L-aspartate(89)-[ribosomal protein uS12]-hydrogen + (sulfur carrier)-H + 5'-deoxyadenosine + L-methionine + A + S-adenosyl-L-homocysteine + 2 H(+). Catalyzes the methylthiolation of an aspartic acid residue of ribosomal protein uS12. This is Ribosomal protein uS12 methylthiotransferase RimO from Desulfosudis oleivorans (strain DSM 6200 / JCM 39069 / Hxd3) (Desulfococcus oleovorans).